Reading from the N-terminus, the 520-residue chain is GMP synthase [glutamine-hydrolyzing] (520 aa).

One can recognise a Glutamine amidotransferase type-1 domain in the interval 9–202 (RVLIVDFGSQ…LFNIAGLKGD (194 aa)). Cys-86 serves as the catalytic Nucleophile. Catalysis depends on residues His-176 and Glu-178. The GMPS ATP-PPase domain maps to 203 to 395 (WTMAAFRQEM…LGLAPAFVGR (193 aa)). Residue 230–236 (SGGVDSS) participates in ATP binding.

Homodimer.

The catalysed reaction is XMP + L-glutamine + ATP + H2O = GMP + L-glutamate + AMP + diphosphate + 2 H(+). It participates in purine metabolism; GMP biosynthesis; GMP from XMP (L-Gln route): step 1/1. Functionally, catalyzes the synthesis of GMP from XMP. This is GMP synthase [glutamine-hydrolyzing] from Caulobacter vibrioides (strain ATCC 19089 / CIP 103742 / CB 15) (Caulobacter crescentus).